A 625-amino-acid chain; its full sequence is uncharacterized protein (625 aa).

The segment at residues 23 to 51 (CLACRRKKLKCDHGRPCSNCLKRSTIQSC) is a DNA-binding region (zn(2)-C6 fungal-type). Positions 93–113 (GTKSQSDYENQQSHNLPSTPS) are enriched in polar residues. Residues 93–119 (GTKSQSDYENQQSHNLPSTPSADAETQ) form a disordered region.

Its subcellular location is the nucleus. The protein resides in the cytoplasm. It localises to the cytoskeleton. It is found in the spindle. This is an uncharacterized protein from Schizosaccharomyces pombe (strain 972 / ATCC 24843) (Fission yeast).